Reading from the N-terminus, the 134-residue chain is Profilin-1 (134 aa).

A disulfide bridge links C13 with C118. The Involved in PIP2 interaction signature appears at 84–100 (AVIRGKKGSGGITIKKT). T114 is modified (phosphothreonine).

This sequence belongs to the profilin family. As to quaternary structure, occurs in many kinds of cells as a complex with monomeric actin in a 1:1 ratio. Post-translationally, phosphorylated by MAP kinases.

The protein resides in the cytoplasm. Its subcellular location is the cytoskeleton. Its function is as follows. Binds to actin and affects the structure of the cytoskeleton. At high concentrations, profilin prevents the polymerization of actin, whereas it enhances it at low concentrations. The sequence is that of Profilin-1 from Olea europaea (Common olive).